Here is a 109-residue protein sequence, read N- to C-terminus: Large ribosomal subunit protein uL24 (109 aa).

Belongs to the universal ribosomal protein uL24 family. In terms of assembly, part of the 50S ribosomal subunit.

Functionally, one of two assembly initiator proteins, it binds directly to the 5'-end of the 23S rRNA, where it nucleates assembly of the 50S subunit. In terms of biological role, one of the proteins that surrounds the polypeptide exit tunnel on the outside of the subunit. This Ehrlichia canis (strain Jake) protein is Large ribosomal subunit protein uL24.